The following is a 708-amino-acid chain: Leukotoxin translocation ATP-binding protein LktB (708 aa).

In terms of domain architecture, Peptidase C39 spans 1-126; that stretch reads MEANHQRNDL…ACYQGQLILV (126 aa). The 283-residue stretch at 155–437 folds into the ABC transmembrane type-1 domain; it reads FLETLIVSIF…LAQLWQDFQQ (283 aa). A run of 5 helical transmembrane segments spans residues 159–179, 192–212, 270–290, 296–316, and 389–409; these read LIVSIFLQIFALITPLFFQVV, LNIITVALAIVIIFEIVLSGL, ALTSVLDLLFSFIFFAVMWYY, LVILGSLPCYILWSIFISPIL, and VMVINLWLGAHLVISGDLSIG. One can recognise an ABC transporter domain in the interval 469–704; it reads IAFKNIRFRY…SNGLYSYLHQ (236 aa). Position 503–510 (503–510) interacts with ATP; it reads GRSGSGKS.

It belongs to the ABC transporter superfamily. Protein-1 exporter (TC 3.A.1.109) family. Homodimer.

It localises to the cell inner membrane. It catalyses the reaction ATP + H2O + proteinSide 1 = ADP + phosphate + proteinSide 2.. Part of the ABC transporter complex LktBD involved in leukotoxin export. Transmembrane domains (TMD) form a pore in the inner membrane and the ATP-binding domain (NBD) is responsible for energy generation. The sequence is that of Leukotoxin translocation ATP-binding protein LktB (lktB) from Mannheimia glucosida.